The primary structure comprises 48 residues: Palustrin-3b (48 aa).

Residues Cys43 and Cys48 are joined by a disulfide bond.

As to expression, expressed by the skin glands.

The protein resides in the secreted. In terms of biological role, antimicrobial activity against Gram-negative bacterium E.coli. This Lithobates palustris (Pickerel frog) protein is Palustrin-3b.